We begin with the raw amino-acid sequence, 309 residues long: 11-beta-hydroxysteroid dehydrogenase-like 3 (309 aa).

Residues 10–30 (LLLPPLTIIFLFLFYPFYLLI) traverse the membrane as a helical; Signal-anchor for type II membrane protein segment. Residues 54–80 (GASS…VARR) and Asp-105 each bind NADP(+). Position 184 (Ser-184) interacts with substrate. Tyr-197 acts as the Proton acceptor in catalysis. Residues 197–201 (YAASK) and Lys-201 contribute to the NADP(+) site.

It belongs to the short-chain dehydrogenases/reductases (SDR) family.

It is found in the membrane. In Arabidopsis thaliana (Mouse-ear cress), this protein is 11-beta-hydroxysteroid dehydrogenase-like 3 (HSD3).